The chain runs to 177 residues: tRNA-splicing endonuclease (177 aa).

Active-site residues include Tyr114, His123, and Lys154.

Belongs to the tRNA-intron endonuclease family. Archaeal short subfamily. In terms of assembly, homotetramer; although the tetramer contains four active sites, only two participate in the cleavage. Therefore, it should be considered as a dimer of dimers.

The catalysed reaction is pretRNA = a 3'-half-tRNA molecule with a 5'-OH end + a 5'-half-tRNA molecule with a 2',3'-cyclic phosphate end + an intron with a 2',3'-cyclic phosphate and a 5'-hydroxyl terminus.. Its function is as follows. Endonuclease that removes tRNA introns. Cleaves pre-tRNA at the 5'- and 3'-splice sites to release the intron. The products are an intron and two tRNA half-molecules bearing 2',3' cyclic phosphate and 5'-OH termini. Recognizes a pseudosymmetric substrate in which 2 bulged loops of 3 bases are separated by a stem of 4 bp. The sequence is that of tRNA-splicing endonuclease from Methanococcus vannielii (strain ATCC 35089 / DSM 1224 / JCM 13029 / OCM 148 / SB).